The sequence spans 285 residues: Protease HtpX homolog (285 aa).

2 helical membrane passes run 7 to 27 and 30 to 50; these read TAMLMAGITALFIVIGGMIGG and GMTIALLFALAMNFFSYWFSD. His131 lines the Zn(2+) pocket. The active site involves Glu132. His135 serves as a coordination point for Zn(2+). The next 2 membrane-spanning stretches (helical) occupy residues 146-166 and 177-197; these read ITATMAGAISALANFAMFFGG and IAGIAVALLAPIAGALIQMAI. Zn(2+) is bound at residue Glu202.

It belongs to the peptidase M48B family. Zn(2+) is required as a cofactor.

Its subcellular location is the cell inner membrane. The polypeptide is Protease HtpX homolog (Burkholderia ambifaria (strain MC40-6)).